Reading from the N-terminus, the 238-residue chain is 3-dehydroquinate dehydratase (238 aa).

Residues 35–37 and R70 each bind 3-dehydroquinate; that span reads ELR. The active-site Proton donor/acceptor is the H133. K160 functions as the Schiff-base intermediate with substrate in the catalytic mechanism. Positions 202 and 225 each coordinate 3-dehydroquinate.

This sequence belongs to the type-I 3-dehydroquinase family. In terms of assembly, homodimer.

The catalysed reaction is 3-dehydroquinate = 3-dehydroshikimate + H2O. Its pathway is metabolic intermediate biosynthesis; chorismate biosynthesis; chorismate from D-erythrose 4-phosphate and phosphoenolpyruvate: step 3/7. Involved in the third step of the chorismate pathway, which leads to the biosynthesis of aromatic amino acids. Catalyzes the cis-dehydration of 3-dehydroquinate (DHQ) and introduces the first double bond of the aromatic ring to yield 3-dehydroshikimate. This is 3-dehydroquinate dehydratase from Staphylococcus aureus (strain MSSA476).